The sequence spans 458 residues: Monomethylamine methyltransferase MtmB2 (458 aa).

A non-standard amino acid (pyrrolysine) is located at residue Pyl-202.

Belongs to the monomethylamine methyltransferase family. In terms of assembly, can form a complex with MtmC (MtmC1 or MtmC2).

It catalyses the reaction Co(I)-[methylamine-specific corrinoid protein] + methylamine + H(+) = methyl-Co(III)-[methylamine-specific corrinoid protein] + NH4(+). It participates in one-carbon metabolism; methanogenesis from methylamine. In terms of biological role, catalyzes the transfer of the methyl group from monomethylamine to the corrinoid cofactor of MtmC (MtmC1 or MtmC2). The chain is Monomethylamine methyltransferase MtmB2 (mtmB2) from Methanosarcina barkeri.